The sequence spans 376 residues: MPRPIHASISLAALAHNLDVVRRHLDQAAQAAGGAPPSIWAVIKANAYGHGIEAAVAGFSAAQGLAMLDLAEAVRCREAGWGGPILLLEGFFQPADLDLIDRYHLSATVHTREQLDMLAQARLSRRVDIMLKLNSGMNRLGFDPDAYGSAHARALQLREQGVVGAVGRMTHFACADGTPGVAGQLRVFQSVTQGLADGPVSVCNSAATLRYPEIAVAHGAQAHWVRPGICLYGASPFADADAASFGLRPAMSLRSQIIGVQDLPAGAEVGYGATFRAERPMRVGVVACGYADGYPRHAGTGTPVVVGGVRTRLVGRVSMDMLMVDLDPVPAAGIGTPVSLWGQDGPSVDEVAQAAGTIGYELLCALAPRVPVKRDS.

Residue Lys44 is the Proton acceptor; specific for D-alanine of the active site. Residue Lys44 is modified to N6-(pyridoxal phosphate)lysine. Arg139 contributes to the substrate binding site. Tyr271 serves as the catalytic Proton acceptor; specific for L-alanine. Met319 contacts substrate.

It belongs to the alanine racemase family. It depends on pyridoxal 5'-phosphate as a cofactor.

It catalyses the reaction L-alanine = D-alanine. Its pathway is amino-acid biosynthesis; D-alanine biosynthesis; D-alanine from L-alanine: step 1/1. Functionally, catalyzes the interconversion of L-alanine and D-alanine. May also act on other amino acids. In Bordetella petrii (strain ATCC BAA-461 / DSM 12804 / CCUG 43448), this protein is Alanine racemase (alr).